A 281-amino-acid polypeptide reads, in one-letter code: Pantothenate synthetase (281 aa).

ATP is bound at residue 30–37; sequence MGNLHLGH. H37 functions as the Proton donor in the catalytic mechanism. (R)-pantoate is bound at residue Q61. A beta-alanine-binding site is contributed by Q61. 149–152 provides a ligand contact to ATP; sequence GRKD. Q155 is a binding site for (R)-pantoate. ATP contacts are provided by residues I178 and 186–189; that span reads MSSR.

This sequence belongs to the pantothenate synthetase family. As to quaternary structure, homodimer.

It localises to the cytoplasm. It catalyses the reaction (R)-pantoate + beta-alanine + ATP = (R)-pantothenate + AMP + diphosphate + H(+). Its pathway is cofactor biosynthesis; (R)-pantothenate biosynthesis; (R)-pantothenate from (R)-pantoate and beta-alanine: step 1/1. Catalyzes the condensation of pantoate with beta-alanine in an ATP-dependent reaction via a pantoyl-adenylate intermediate. The chain is Pantothenate synthetase from Shewanella woodyi (strain ATCC 51908 / MS32).